Here is a 499-residue protein sequence, read N- to C-terminus: Serine carboxypeptidase 1 (499 aa).

The signal sequence occupies residues 1 to 30; sequence MARCRRRSGCTAGAALLLLLALALSGGGGA. Intrachain disulfides connect Cys92-Cys388, Cys256-Cys268, and Cys291-Cys355. An N-linked (GlcNAc...) asparagine glycan is attached at Asn148. The active site involves Ser188. Asn262 carries N-linked (GlcNAc...) asparagine glycosylation. The propeptide at 297–351 is linker peptide; it reads IKEVNLQNSKLPQSFKDLGTTNKPFPVRTRMLGRAWPLRAPVKAGRVPSWQEVAS. N-linked (GlcNAc...) asparagine glycosylation occurs at Asn407. Residues Asp423 and His476 contribute to the active site. Positions 497-499 match the Microbody targeting signal motif; that stretch reads SKL.

The protein belongs to the peptidase S10 family. In terms of assembly, carboxypeptidase I is a dimer, where each monomer is composed of two chains linked by disulfide bonds. The linker peptide is endoproteolytically excised during enzyme maturation.

It localises to the secreted. It carries out the reaction Release of a C-terminal amino acid with broad specificity.. Functionally, may be involved in the degradation of small peptides (2-5 residues) or in the degradation of storage proteins in the embryo. This chain is Serine carboxypeptidase 1 (CBP1), found in Hordeum vulgare (Barley).